A 142-amino-acid polypeptide reads, in one-letter code: Large ribosomal subunit protein uL11 (142 aa).

Belongs to the universal ribosomal protein uL11 family. In terms of assembly, part of the ribosomal stalk of the 50S ribosomal subunit. Interacts with L10 and the large rRNA to form the base of the stalk. L10 forms an elongated spine to which L12 dimers bind in a sequential fashion forming a multimeric L10(L12)X complex. In terms of processing, one or more lysine residues are methylated.

Functionally, forms part of the ribosomal stalk which helps the ribosome interact with GTP-bound translation factors. This chain is Large ribosomal subunit protein uL11, found in Rhodopseudomonas palustris (strain BisA53).